A 346-amino-acid chain; its full sequence is Phosphoribosylformylglycinamidine cyclo-ligase (346 aa).

The protein belongs to the AIR synthase family.

It is found in the cytoplasm. It catalyses the reaction 2-formamido-N(1)-(5-O-phospho-beta-D-ribosyl)acetamidine + ATP = 5-amino-1-(5-phospho-beta-D-ribosyl)imidazole + ADP + phosphate + H(+). The protein operates within purine metabolism; IMP biosynthesis via de novo pathway; 5-amino-1-(5-phospho-D-ribosyl)imidazole from N(2)-formyl-N(1)-(5-phospho-D-ribosyl)glycinamide: step 2/2. This is Phosphoribosylformylglycinamidine cyclo-ligase from Aliivibrio fischeri (strain ATCC 700601 / ES114) (Vibrio fischeri).